Consider the following 140-residue polypeptide: Arsenate reductase (140 aa).

Residue C11 is the Nucleophile; cysteine thioarsenate intermediate of the active site.

Belongs to the ArsC family.

It carries out the reaction [glutaredoxin]-dithiol + arsenate + glutathione + H(+) = glutathionyl-S-S-[glutaredoxin] + arsenite + H2O. Involved in resistance to arsenate. Catalyzes the reduction of arsenate [As(V)] to arsenite [As(III)]. The resulting arsenite is then extruded from the cell via the aquaglyceroporin AqpS. Does not display antimonate reductase activity. In Rhizobium meliloti (strain 1021) (Ensifer meliloti), this protein is Arsenate reductase.